Reading from the N-terminus, the 210-residue chain is Oxygen-insensitive NADPH nitroreductase (210 aa).

150-155 (GVSLMG) is a binding site for NADP(+).

Belongs to the nitroreductase family.

In terms of biological role, reduction of a variety of nitroaromatic compounds using NADPH as source of reducing equivalents; two electrons are transferred. Capable of reducing metronidazole; inactive RdxA renders the bacterium resistant to this compound. The reduction of metronidazole generates hydroxylamine, a potent mutagen and bactericide. The chain is Oxygen-insensitive NADPH nitroreductase (rdxA) from Helicobacter pylori (strain ATCC 700392 / 26695) (Campylobacter pylori).